A 203-amino-acid chain; its full sequence is Guanylate kinase (203 aa).

The Guanylate kinase-like domain maps to 3-181 (GSLFIVAAPS…AHTDLRAIVQ (179 aa)). Residue 10–17 (APSGAGKT) coordinates ATP.

It belongs to the guanylate kinase family.

It localises to the cytoplasm. It carries out the reaction GMP + ATP = GDP + ADP. Its function is as follows. Essential for recycling GMP and indirectly, cGMP. In Nitrosococcus oceani (strain ATCC 19707 / BCRC 17464 / JCM 30415 / NCIMB 11848 / C-107), this protein is Guanylate kinase.